The chain runs to 210 residues: Large ribosomal subunit protein bL25 (210 aa).

The protein belongs to the bacterial ribosomal protein bL25 family. CTC subfamily. In terms of assembly, part of the 50S ribosomal subunit; part of the 5S rRNA/L5/L18/L25 subcomplex. Contacts the 5S rRNA. Binds to the 5S rRNA independently of L5 and L18.

Its function is as follows. This is one of the proteins that binds to the 5S RNA in the ribosome where it forms part of the central protuberance. The sequence is that of Large ribosomal subunit protein bL25 from Herminiimonas arsenicoxydans.